Consider the following 421-residue polypeptide: D-inositol 3-phosphate glycosyltransferase (421 aa).

A 1D-myo-inositol 3-phosphate-binding site is contributed by H9. UDP-N-acetyl-alpha-D-glucosamine is bound by residues Q15–P16 and G23. 1D-myo-inositol 3-phosphate contacts are provided by residues D20–N25, K78, Y110, T134, and R154. 3 residues coordinate UDP-N-acetyl-alpha-D-glucosamine: R231, K236, and R294. 3 residues coordinate Mg(2+): Y303, Q304, and A306. Residues E316 and E324 each contribute to the UDP-N-acetyl-alpha-D-glucosamine site. A Mg(2+)-binding site is contributed by T330.

Belongs to the glycosyltransferase group 1 family. MshA subfamily. As to quaternary structure, homodimer.

The catalysed reaction is 1D-myo-inositol 3-phosphate + UDP-N-acetyl-alpha-D-glucosamine = 1D-myo-inositol 2-acetamido-2-deoxy-alpha-D-glucopyranoside 3-phosphate + UDP + H(+). In terms of biological role, catalyzes the transfer of a N-acetyl-glucosamine moiety to 1D-myo-inositol 3-phosphate to produce 1D-myo-inositol 2-acetamido-2-deoxy-glucopyranoside 3-phosphate in the mycothiol biosynthesis pathway. The protein is D-inositol 3-phosphate glycosyltransferase of Corynebacterium aurimucosum (strain ATCC 700975 / DSM 44827 / CIP 107346 / CN-1) (Corynebacterium nigricans).